A 155-amino-acid polypeptide reads, in one-letter code: Ribonuclease H (155 aa).

An RNase H type-1 domain is found at 9-150 (DGQQVEMWTD…ADALANQGME (142 aa)). Mg(2+)-binding residues include D18, E56, D78, and D142.

It belongs to the RNase H family. In terms of assembly, monomer. Mg(2+) serves as cofactor.

Its subcellular location is the cytoplasm. The enzyme catalyses Endonucleolytic cleavage to 5'-phosphomonoester.. In terms of biological role, endonuclease that specifically degrades the RNA of RNA-DNA hybrids. The chain is Ribonuclease H from Bordetella pertussis (strain Tohama I / ATCC BAA-589 / NCTC 13251).